The chain runs to 500 residues: Protein nucleotidyltransferase YdiU (500 aa).

8 residues coordinate ATP: G98, G100, R101, K124, D136, G137, R187, and R194. The Proton acceptor role is filled by D263. Mg(2+) is bound by residues N264 and D273. D273 contributes to the ATP binding site.

Belongs to the SELO family. Mg(2+) serves as cofactor. Mn(2+) is required as a cofactor.

The catalysed reaction is L-seryl-[protein] + ATP = 3-O-(5'-adenylyl)-L-seryl-[protein] + diphosphate. It carries out the reaction L-threonyl-[protein] + ATP = 3-O-(5'-adenylyl)-L-threonyl-[protein] + diphosphate. The enzyme catalyses L-tyrosyl-[protein] + ATP = O-(5'-adenylyl)-L-tyrosyl-[protein] + diphosphate. It catalyses the reaction L-histidyl-[protein] + UTP = N(tele)-(5'-uridylyl)-L-histidyl-[protein] + diphosphate. The catalysed reaction is L-seryl-[protein] + UTP = O-(5'-uridylyl)-L-seryl-[protein] + diphosphate. It carries out the reaction L-tyrosyl-[protein] + UTP = O-(5'-uridylyl)-L-tyrosyl-[protein] + diphosphate. Nucleotidyltransferase involved in the post-translational modification of proteins. It can catalyze the addition of adenosine monophosphate (AMP) or uridine monophosphate (UMP) to a protein, resulting in modifications known as AMPylation and UMPylation. This Herminiimonas arsenicoxydans protein is Protein nucleotidyltransferase YdiU.